The primary structure comprises 729 residues: Polyribonucleotide nucleotidyltransferase (729 aa).

Residues aspartate 485 and aspartate 491 each contribute to the Mg(2+) site. The KH domain occupies 552–611 (PRITTMKVAEDKIRTIIGKGGATIKGLIESTGVSIDIDDSGVIQLFSPDKMALEEAQKQI). One can recognise an S1 motif domain in the interval 621–689 (GQTYQGKVSK…KQGRVKLEWK (69 aa)).

The protein belongs to the polyribonucleotide nucleotidyltransferase family. As to quaternary structure, component of the RNA degradosome, which is a multiprotein complex involved in RNA processing and mRNA degradation. Mg(2+) is required as a cofactor.

It localises to the cytoplasm. It catalyses the reaction RNA(n+1) + phosphate = RNA(n) + a ribonucleoside 5'-diphosphate. Its function is as follows. Involved in mRNA degradation. Catalyzes the phosphorolysis of single-stranded polyribonucleotides processively in the 3'- to 5'-direction. The chain is Polyribonucleotide nucleotidyltransferase from Legionella pneumophila (strain Corby).